A 373-amino-acid chain; its full sequence is MTQTDNPVPNCGLLPEQQYCSADHEEPLLLHEEQLIFPDHSSQLSSADIIEPIKMNSSTESIIGTTLRKKWVPLSSTQITALSGAFAGFLSGVAVCPLDVAKTRLQAQGLQTRFENPYYRGIMGTLSTIVRDEGPRGLYKGLVPIVLGYFPTWMIYFSVYEFSKKFFHGIFPQFDFVAQSCAAITAGAASTTLTNPIWVVKTRLMLQSNLGEHPTHYKGTFDAFRKLFYQEGFKALYAGLVPSLLGLFHVAIHFPIYEDLKVRFHCYSRENNTNSINLQRLIMASSVSKMIASAVTYPHEILRTRMQLKSDIPDSIQRRLFPLIKATYAQEGLKGFYSGFTTNLVRTIPASAITLVSFEYFRNRLENISTMVI.

At 1 to 80 (MTQTDNPVPN…WVPLSSTQIT (80 aa)) the chain is on the mitochondrial matrix side. Solcar repeat units lie at residues 75–166 (SSTQ…SKKF), 174–263 (FDFV…LKVR), and 276–364 (INLQ…FRNR). The helical transmembrane segment at 81-101 (ALSGAFAGFLSGVAVCPLDVA) threads the bilayer. Over 102-141 (KTRLQAQGLQTRFENPYYRGIMGTLSTIVRDEGPRGLYKG) the chain is Mitochondrial intermembrane. Residues 142 to 162 (LVPIVLGYFPTWMIYFSVYEF) traverse the membrane as a helical segment. Over 163–176 (SKKFFHGIFPQFDF) the chain is Mitochondrial matrix. Residues 177-199 (VAQSCAAITAGAASTTLTNPIWV) traverse the membrane as a helical segment. The Mitochondrial intermembrane segment spans residues 200-235 (VKTRLMLQSNLGEHPTHYKGTFDAFRKLFYQEGFKA). A helical membrane pass occupies residues 236 to 256 (LYAGLVPSLLGLFHVAIHFPI). Residues 257-280 (YEDLKVRFHCYSRENNTNSINLQR) are Mitochondrial matrix-facing. The helical transmembrane segment at 281 to 297 (LIMASSVSKMIASAVTY) threads the bilayer. Residues 298 to 335 (PHEILRTRMQLKSDIPDSIQRRLFPLIKATYAQEGLKG) are Mitochondrial intermembrane-facing. The helical transmembrane segment at 336–358 (FYSGFTTNLVRTIPASAITLVSF) threads the bilayer. At 359 to 373 (EYFRNRLENISTMVI) the chain is on the mitochondrial matrix side.

This sequence belongs to the mitochondrial carrier (TC 2.A.29) family.

It localises to the mitochondrion inner membrane. It carries out the reaction dAMP(in) + NAD(+)(out) = dAMP(out) + NAD(+)(in). It catalyses the reaction dGMP(in) + NAD(+)(out) = dGMP(out) + NAD(+)(in). The catalysed reaction is GMP(in) + NAD(+)(out) = GMP(out) + NAD(+)(in). The enzyme catalyses AMP(in) + NAD(+)(out) = AMP(out) + NAD(+)(in). It carries out the reaction deamido-NAD(+)(in) + NAD(+)(out) = deamido-NAD(+)(out) + NAD(+)(in). Functionally, mitochondrial inner membrane carrier protein that mediates the import of NAD(+) into mitochondria. Can transport NAD(+) by unidirectional transport or by exchange with intramitochondrially generated dAMP and dGMP. Also able to transport NAD(+) by exchange with AMP, GMP or deamido-NAD (+) in vitro. The chain is Mitochondrial nicotinamide adenine dinucleotide transporter 1 (YIA6) from Saccharomyces cerevisiae (strain ATCC 204508 / S288c) (Baker's yeast).